We begin with the raw amino-acid sequence, 179 residues long: Shikimate kinase (179 aa).

Position 22–27 (22–27) interacts with ATP; the sequence is GTGKSS. Mg(2+) is bound at residue serine 26. Positions 44, 68, and 90 each coordinate substrate. Arginine 128 provides a ligand contact to ATP. Residue arginine 147 participates in substrate binding.

This sequence belongs to the shikimate kinase family. As to quaternary structure, monomer. Requires Mg(2+) as cofactor.

The protein localises to the cytoplasm. The catalysed reaction is shikimate + ATP = 3-phosphoshikimate + ADP + H(+). Its pathway is metabolic intermediate biosynthesis; chorismate biosynthesis; chorismate from D-erythrose 4-phosphate and phosphoenolpyruvate: step 5/7. In terms of biological role, catalyzes the specific phosphorylation of the 3-hydroxyl group of shikimic acid using ATP as a cosubstrate. The chain is Shikimate kinase from Geobacter metallireducens (strain ATCC 53774 / DSM 7210 / GS-15).